The following is a 195-amino-acid chain: Imidazoleglycerol-phosphate dehydratase (195 aa).

It belongs to the imidazoleglycerol-phosphate dehydratase family.

The protein localises to the cytoplasm. The enzyme catalyses D-erythro-1-(imidazol-4-yl)glycerol 3-phosphate = 3-(imidazol-4-yl)-2-oxopropyl phosphate + H2O. It functions in the pathway amino-acid biosynthesis; L-histidine biosynthesis; L-histidine from 5-phospho-alpha-D-ribose 1-diphosphate: step 6/9. The protein is Imidazoleglycerol-phosphate dehydratase of Polynucleobacter necessarius subsp. necessarius (strain STIR1).